The sequence spans 513 residues: 2,3-bisphosphoglycerate-independent phosphoglycerate mutase (513 aa).

Mn(2+) contacts are provided by aspartate 14 and serine 64. Serine 64 acts as the Phosphoserine intermediate in catalysis. Residues histidine 125, 155-156 (RD), arginine 187, arginine 193, 259-262 (RADR), and lysine 333 contribute to the substrate site. Mn(2+) contacts are provided by aspartate 400, histidine 404, aspartate 441, histidine 442, and histidine 460.

The protein belongs to the BPG-independent phosphoglycerate mutase family. Monomer. Mn(2+) serves as cofactor.

It catalyses the reaction (2R)-2-phosphoglycerate = (2R)-3-phosphoglycerate. Its pathway is carbohydrate degradation; glycolysis; pyruvate from D-glyceraldehyde 3-phosphate: step 3/5. Catalyzes the interconversion of 2-phosphoglycerate and 3-phosphoglycerate. The chain is 2,3-bisphosphoglycerate-independent phosphoglycerate mutase from Pseudomonas fluorescens (strain ATCC BAA-477 / NRRL B-23932 / Pf-5).